The primary structure comprises 707 residues: U-box domain-containing protein 2 (707 aa).

The 75-residue stretch at Arg-239–Tyr-313 folds into the U-box domain. ARM repeat units follow at residues Thr-453–Ile-492, Asp-494–Val-534, Glu-536–Ile-575, His-577–Thr-615, and Arg-617–Thr-656.

The catalysed reaction is S-ubiquitinyl-[E2 ubiquitin-conjugating enzyme]-L-cysteine + [acceptor protein]-L-lysine = [E2 ubiquitin-conjugating enzyme]-L-cysteine + N(6)-ubiquitinyl-[acceptor protein]-L-lysine.. Its pathway is protein modification; protein ubiquitination. In terms of biological role, functions as an E3 ubiquitin ligase. In Arabidopsis thaliana (Mouse-ear cress), this protein is U-box domain-containing protein 2 (PUB2).